A 390-amino-acid chain; its full sequence is Zinc finger CCCH domain-containing protein 46 (390 aa).

The segment at Ser2–Pro29 adopts a C3H1-type zinc-finger fold. The disordered stretch occupies residues Ala27–Gln129. Positions Gly48 to Phe76 are enriched in low complexity. Residues Pro106 to Gln129 are compositionally biased toward polar residues. A required for transcriptional activation activity region spans residues Trp146–Pro211. Polar residues predominate over residues Ser230–Gln248. Positions Ser230 to Thr284 are disordered. Residues Gly250 to Ala268 are compositionally biased toward low complexity.

As to quaternary structure, interacts with GSK1 and GSK4. Phosphorylated on serine and threonine residues by GSK1. Phosphorylation represses nuclear localization. Expressed in the adaxial face of the collar, nodes and the basal region of elongating internodes.

It localises to the nucleus. Its subcellular location is the cytoplasm. Transcriptional activator that binds double-stranded DNA and the single-stranded RNA polymers poly(rA), poly(rU) and poly(rG), but not poly(rC). Mediates optimal plant architecture through brassinosteroid (BR) signaling. May act as a negative regulator in sterol homeostasis. Acts as a negative regulator of BR signaling. Binds to the specific DNA sequence 5'-CTCGC-3' of BZR1 promoter and negatively regulates BZR1. Acts as an antagonistic transcription factor of BZR1 to attenuate the BR signaling pathway and regulate leaf bending. Represses the expression of ILI1, and activates that of IBH1 to balance the regulation activity of BZR1. The sequence is that of Zinc finger CCCH domain-containing protein 46 from Oryza sativa subsp. japonica (Rice).